A 110-amino-acid chain; its full sequence is NADH-quinone oxidoreductase subunit K (110 aa).

Helical transmembrane passes span 13–33, 41–61, and 73–93; these read LNHY…GLFM, ILMS…AFSV, and IIIL…LLIY.

This sequence belongs to the complex I subunit 4L family. NDH-1 is composed of 14 different subunits. Subunits NuoA, H, J, K, L, M, N constitute the membrane sector of the complex.

The protein localises to the cell inner membrane. It carries out the reaction a quinone + NADH + 5 H(+)(in) = a quinol + NAD(+) + 4 H(+)(out). In terms of biological role, NDH-1 shuttles electrons from NADH, via FMN and iron-sulfur (Fe-S) centers, to quinones in the respiratory chain. The immediate electron acceptor for the enzyme in this species is believed to be ubiquinone. Couples the redox reaction to proton translocation (for every two electrons transferred, four hydrogen ions are translocated across the cytoplasmic membrane), and thus conserves the redox energy in a proton gradient. The polypeptide is NADH-quinone oxidoreductase subunit K (Rickettsia typhi (strain ATCC VR-144 / Wilmington)).